The following is a 265-amino-acid chain: 4-hydroxy-tetrahydrodipicolinate reductase (265 aa).

NAD(+) contacts are provided by residues 7–12, Asp-33, 96–98, and 120–123; these read GASGRM, GTT, and AANM. The Proton donor/acceptor role is filled by His-153. His-154 contacts (S)-2,3,4,5-tetrahydrodipicolinate. Lys-157 (proton donor) is an active-site residue. 163–164 serves as a coordination point for (S)-2,3,4,5-tetrahydrodipicolinate; the sequence is GT.

This sequence belongs to the DapB family.

Its subcellular location is the cytoplasm. It catalyses the reaction (S)-2,3,4,5-tetrahydrodipicolinate + NAD(+) + H2O = (2S,4S)-4-hydroxy-2,3,4,5-tetrahydrodipicolinate + NADH + H(+). It carries out the reaction (S)-2,3,4,5-tetrahydrodipicolinate + NADP(+) + H2O = (2S,4S)-4-hydroxy-2,3,4,5-tetrahydrodipicolinate + NADPH + H(+). The protein operates within amino-acid biosynthesis; L-lysine biosynthesis via DAP pathway; (S)-tetrahydrodipicolinate from L-aspartate: step 4/4. Its function is as follows. Catalyzes the conversion of 4-hydroxy-tetrahydrodipicolinate (HTPA) to tetrahydrodipicolinate. In Cupriavidus pinatubonensis (strain JMP 134 / LMG 1197) (Cupriavidus necator (strain JMP 134)), this protein is 4-hydroxy-tetrahydrodipicolinate reductase.